Reading from the N-terminus, the 72-residue chain is Protein kish-A (72 aa).

Positions 1–26 (MSAIFNFQSLLIVILLLICTCAYLRS) are cleaved as a signal peptide. Residues 27–53 (LVPNLLDKNKTGVLGIFWKCARIGERK) lie on the Extracellular side of the membrane. Asn35 carries N-linked (GlcNAc...) asparagine glycosylation. The helical transmembrane segment at 54–71 (SPYVAVCCVVMAFSILFM) threads the bilayer. Position 72 (Gln72) is a topological domain, cytoplasmic.

The protein belongs to the KISH family.

The protein localises to the golgi apparatus membrane. Involved in the early part of the secretory pathway. In Xenopus laevis (African clawed frog), this protein is Protein kish-A (tmem167a).